A 65-amino-acid polypeptide reads, in one-letter code: Large ribosomal subunit protein bL33c (65 aa).

Belongs to the bacterial ribosomal protein bL33 family.

It localises to the plastid. It is found in the chloroplast. This chain is Large ribosomal subunit protein bL33c, found in Gracilaria tenuistipitata var. liui (Red alga).